The primary structure comprises 330 residues: Probable cell division protein WhiA (330 aa).

The segment at residues 275 to 308 is a DNA-binding region (H-T-H motif); the sequence is SLDELGRLSDPPLTKDAIAGRIRRLLAMADRRAE.

It belongs to the WhiA family.

Its function is as follows. Involved in cell division and chromosome segregation. This is Probable cell division protein WhiA from Kocuria rhizophila (strain ATCC 9341 / DSM 348 / NBRC 103217 / DC2201).